The sequence spans 495 residues: Internal alternative NAD(P)H-ubiquinone oxidoreductase A1, mitochondrial (495 aa).

The transit peptide at 1-41 (MPWFKNLIKISKTITNQSSSYKSITPLASPLLAQFLQFTKQ) directs the protein to the mitochondrion. 61-91 (RIVVLGSGWAGCRLMKDIDTNIYDVVCVSPR) contacts FAD. Residue 228–264 (LHCVVVGGGPTGVEFSGELSDFILKDVHQRYAHVKDY) coordinates NAD(+). The Microbody targeting signal signature appears at 486-495 (LVFGRDISRI).

Belongs to the NADH dehydrogenase family. The cofactor is FAD.

It is found in the mitochondrion inner membrane. It localises to the peroxisome. The catalysed reaction is a quinone + NADH + H(+) = a quinol + NAD(+). It catalyses the reaction a ubiquinone + NADH + H(+) = a ubiquinol + NAD(+). In terms of biological role, alternative NADH-ubiquinone oxidoreductase which catalyzes the oxidation of mitochondrial NADH does not translocate protons across the inner mitochondrial membrane. In Solanum tuberosum (Potato), this protein is Internal alternative NAD(P)H-ubiquinone oxidoreductase A1, mitochondrial (NDA1).